The primary structure comprises 372 residues: Geranylgeranyl pyrophosphate synthase 4 (372 aa).

An N-terminal signal peptide occupies residues 1 to 22 (MEAQNIFLYLLIVFLSLHFVFT). Isopentenyl diphosphate contacts are provided by K121, R124, and H153. Mg(2+) contacts are provided by D160 and D166. R171 is a dimethylallyl diphosphate binding site. R172 serves as a coordination point for isopentenyl diphosphate. K257, T258, Q295, K312, and K322 together coordinate dimethylallyl diphosphate.

Belongs to the FPP/GGPP synthase family. In terms of assembly, monomer. The cofactor is Mg(2+). In terms of tissue distribution, faintly expressed in flowers. Expressed in roots and siliques.

It is found in the endoplasmic reticulum. It catalyses the reaction isopentenyl diphosphate + dimethylallyl diphosphate = (2E)-geranyl diphosphate + diphosphate. The catalysed reaction is isopentenyl diphosphate + (2E)-geranyl diphosphate = (2E,6E)-farnesyl diphosphate + diphosphate. It carries out the reaction isopentenyl diphosphate + (2E,6E)-farnesyl diphosphate = (2E,6E,10E)-geranylgeranyl diphosphate + diphosphate. The protein operates within isoprenoid biosynthesis; farnesyl diphosphate biosynthesis; farnesyl diphosphate from geranyl diphosphate and isopentenyl diphosphate: step 1/1. It participates in isoprenoid biosynthesis; geranyl diphosphate biosynthesis; geranyl diphosphate from dimethylallyl diphosphate and isopentenyl diphosphate: step 1/1. Its pathway is isoprenoid biosynthesis; geranylgeranyl diphosphate biosynthesis; geranylgeranyl diphosphate from farnesyl diphosphate and isopentenyl diphosphate: step 1/1. In terms of biological role, catalyzes the trans-addition of the three molecules of isopentenyl diphosphate (IPP) onto dimethylallyl diphosphate (DMAPP) to form geranylgeranyl diphosphate. The chain is Geranylgeranyl pyrophosphate synthase 4 from Arabidopsis thaliana (Mouse-ear cress).